Consider the following 205-residue polypeptide: MGQKTHPVGFRLGITHTHQSHWFAHQYSKILQEDHAIRQLLRDYVLKAGIARIHILRKSHQIELELHLARPGILVGRSGLGLDNLRTQLQTKWPHLTWRISLVEVSNPDANAVLLAQWLAQQLEKRIAFRRAIRQAMARAQKVGVKGIKIQVSGRLNGAEIARSEWVRHGQIPLQTLRAPINYAIANAYTTYGVIGVKVWINPKH.

A KH type-2 domain is found at 37–106 (IRQLLRDYVL…TWRISLVEVS (70 aa)).

The protein belongs to the universal ribosomal protein uS3 family. As to quaternary structure, part of the 30S ribosomal subunit.

The protein resides in the plastid. Its subcellular location is the chloroplast. The polypeptide is Small ribosomal subunit protein uS3c (rps3) (Cyanidioschyzon merolae (strain NIES-3377 / 10D) (Unicellular red alga)).